The following is a 693-amino-acid chain: Golgin subfamily A member 6C (693 aa).

Disordered stretches follow at residues 20 to 71 (NKLA…DSQY), 497 to 547 (LPGE…GTEQ), and 629 to 693 (NPAD…MQDT). Positions 73–611 (ELAVALESSS…KLLELQELVL (539 aa)) form a coiled coil. Positions 537 to 547 (LPKEKADGTEQ) are enriched in basic and acidic residues. The segment covering 679-693 (PVQQIVQLSPVMQDT) has biased composition (polar residues).

Belongs to the GOLGA6 family.

The polypeptide is Golgin subfamily A member 6C (GOLGA6C) (Homo sapiens (Human)).